The primary structure comprises 430 residues: Adenylosuccinate synthetase (430 aa).

Residues 13 to 19 (GDEGKGK) and 41 to 43 (GHT) contribute to the GTP site. The Proton acceptor role is filled by aspartate 14. Residues aspartate 14 and glycine 41 each contribute to the Mg(2+) site. Residues 14-17 (DEGK), 39-42 (NAGH), threonine 130, arginine 144, glutamine 225, threonine 240, and arginine 304 contribute to the IMP site. Histidine 42 (proton donor) is an active-site residue. 300–306 (STTGRAR) is a binding site for substrate. Residues arginine 306, 332-334 (KLD), and 414-416 (STG) each bind GTP.

This sequence belongs to the adenylosuccinate synthetase family. As to quaternary structure, homodimer. Requires Mg(2+) as cofactor.

It localises to the cytoplasm. The enzyme catalyses IMP + L-aspartate + GTP = N(6)-(1,2-dicarboxyethyl)-AMP + GDP + phosphate + 2 H(+). The protein operates within purine metabolism; AMP biosynthesis via de novo pathway; AMP from IMP: step 1/2. In terms of biological role, plays an important role in the de novo pathway of purine nucleotide biosynthesis. Catalyzes the first committed step in the biosynthesis of AMP from IMP. This Pseudomonas putida (strain W619) protein is Adenylosuccinate synthetase.